Reading from the N-terminus, the 184-residue chain is NADH-quinone oxidoreductase subunit B (184 aa).

Residues Cys37, Cys38, Cys103, and Cys132 each coordinate [4Fe-4S] cluster.

It belongs to the complex I 20 kDa subunit family. NDH-1 is composed of 14 different subunits. Subunits NuoB, C, D, E, F, and G constitute the peripheral sector of the complex. [4Fe-4S] cluster serves as cofactor.

It is found in the cell membrane. The catalysed reaction is a quinone + NADH + 5 H(+)(in) = a quinol + NAD(+) + 4 H(+)(out). Functionally, NDH-1 shuttles electrons from NADH, via FMN and iron-sulfur (Fe-S) centers, to quinones in the respiratory chain. The immediate electron acceptor for the enzyme in this species is believed to be a menaquinone. Couples the redox reaction to proton translocation (for every two electrons transferred, four hydrogen ions are translocated across the cytoplasmic membrane), and thus conserves the redox energy in a proton gradient. The sequence is that of NADH-quinone oxidoreductase subunit B from Mycobacterium bovis (strain BCG / Pasteur 1173P2).